The primary structure comprises 540 residues: Chaperonin GroEL (540 aa).

Residues 29–32 (TLGP), 86–90 (DGTTT), G413, 476–478 (NAA), and D492 contribute to the ATP site.

Belongs to the chaperonin (HSP60) family. Forms a cylinder of 14 subunits composed of two heptameric rings stacked back-to-back. Interacts with the co-chaperonin GroES.

It is found in the cytoplasm. It carries out the reaction ATP + H2O + a folded polypeptide = ADP + phosphate + an unfolded polypeptide.. Its function is as follows. Together with its co-chaperonin GroES, plays an essential role in assisting protein folding. The GroEL-GroES system forms a nano-cage that allows encapsulation of the non-native substrate proteins and provides a physical environment optimized to promote and accelerate protein folding. The polypeptide is Chaperonin GroEL (Streptococcus pneumoniae (strain Hungary19A-6)).